We begin with the raw amino-acid sequence, 1024 residues long: Error-prone DNA polymerase (1024 aa).

Belongs to the DNA polymerase type-C family. DnaE2 subfamily.

The protein localises to the cytoplasm. It catalyses the reaction DNA(n) + a 2'-deoxyribonucleoside 5'-triphosphate = DNA(n+1) + diphosphate. In terms of biological role, DNA polymerase involved in damage-induced mutagenesis and translesion synthesis (TLS). It is not the major replicative DNA polymerase. The polypeptide is Error-prone DNA polymerase (Vibrio vulnificus (strain YJ016)).